A 28-amino-acid polypeptide reads, in one-letter code: Aryl acylamidase (28 aa).

Homodimer.

The enzyme catalyses an anilide + H2O = aniline + a carboxylate + H(+). The polypeptide is Aryl acylamidase (Nocardia globerula).